Consider the following 119-residue polypeptide: Phytosulfokines 2 (119 aa).

An N-terminal signal peptide occupies residues 1–34; the sequence is MSTTRGVSSSSAAAALALLLLFALCFFSFHSAAA. A propeptide spanning residues 35 to 109 is cleaved from the precursor; the sequence is ARAVPRDEHQ…RRLLSDAHLD (75 aa). Sulfotyrosine is present on residues Tyr110 and Tyr112. Positions 115-119 are excised as a propeptide; sequence HKNKP.

Belongs to the phytosulfokine family. In terms of processing, sulfation is important for activity and for the binding to a putative membrane receptor. PSK-alpha is produced by endopeptidase digestion. PSK-beta is produced from PSK-alpha by exopeptidase digestion.

The protein resides in the secreted. Functionally, promotes plant cell differentiation, organogenesis and somatic embryogenesis as well as cell proliferation. This chain is Phytosulfokines 2 (PSK2), found in Oryza sativa subsp. indica (Rice).